Here is a 182-residue protein sequence, read N- to C-terminus: Nucleosome assembly protein 1-like 5 (182 aa).

Positions 1-71 (MADSENQGPA…APKPKNDFIE (71 aa)) are disordered. Composition is skewed to low complexity over residues 7 to 21 (QGPAEPSQAAAAAEA) and 28 to 49 (AEGGAQGGDCDSAAGDPDSAAG). Residues 81 to 107 (VLALKKLQKRCDKIEAKFDKEFQALEK) are a coiled coil. The disordered stretch occupies residues 134–182 (LEGEEEEEEEYEDDEEEGEDEEEEEAAAEAAAGAKHDDAHAEMPDDAKK). Positions 135–160 (EGEEEEEEEYEDDEEEGEDEEEEEAA) are enriched in acidic residues. Basic and acidic residues predominate over residues 167-182 (AKHDDAHAEMPDDAKK).

The protein belongs to the nucleosome assembly protein (NAP) family. Predominantly expressed in brain.

The protein resides in the nucleus. In Homo sapiens (Human), this protein is Nucleosome assembly protein 1-like 5 (NAP1L5).